Here is a 171-residue protein sequence, read N- to C-terminus: Putative MucR family transcriptional regulatory protein y4pD (171 aa).

The protein belongs to the ros/MucR family.

The polypeptide is Putative MucR family transcriptional regulatory protein y4pD (Sinorhizobium fredii (strain NBRC 101917 / NGR234)).